We begin with the raw amino-acid sequence, 160 residues long: Large ribosomal subunit protein uL13 (160 aa).

This sequence belongs to the universal ribosomal protein uL13 family. In terms of assembly, part of the 50S ribosomal subunit.

In terms of biological role, this protein is one of the early assembly proteins of the 50S ribosomal subunit, although it is not seen to bind rRNA by itself. It is important during the early stages of 50S assembly. This Orientia tsutsugamushi (strain Ikeda) (Rickettsia tsutsugamushi) protein is Large ribosomal subunit protein uL13.